Reading from the N-terminus, the 621-residue chain is Interferon-induced GTP-binding protein Mx1 (621 aa).

The Dynamin-type G domain occupies 31-304 (DLALPAIAVI…LVHHIEKSLP (274 aa)). Residues 41–48 (GDQSSGKS) are G1 motif. 41-48 (GDQSSGKS) serves as a coordination point for GTP. The segment at 66-68 (VTR) is G2 motif. Residues 142-145 (DLPG) are G3 motif. Residues 142-146 (DLPGI) and 211-214 (TKPD) contribute to the GTP site. Positions 211–214 (TKPD) are G4 motif. The interval 243-246 (KCRG) is G5 motif. Residues 535 to 621 (LQEMMLHLKS…MKARSYLVEF (87 aa)) enclose the GED domain.

The protein belongs to the TRAFAC class dynamin-like GTPase superfamily. Dynamin/Fzo/YdjA family.

The protein resides in the cytoplasm. Does not inhibit strain RB-1 of the fish pathogen, infectious hematopoietic necrosis virus (IHNV). The polypeptide is Interferon-induced GTP-binding protein Mx1 (mx1) (Oncorhynchus mykiss (Rainbow trout)).